Here is a 304-residue protein sequence, read N- to C-terminus: Glyceraldehyde-3-phosphate dehydrogenase 2 (304 aa).

NAD(+) contacts are provided by residues 1 to 2 (RI), aspartate 22, and arginine 67. D-glyceraldehyde 3-phosphate is bound by residues 138–140 (SCT), threonine 169, 198–199 (TG), and arginine 221. Cysteine 139 functions as the Nucleophile in the catalytic mechanism. Asparagine 303 serves as a coordination point for NAD(+).

It belongs to the glyceraldehyde-3-phosphate dehydrogenase family. As to quaternary structure, homotetramer.

The protein localises to the cytoplasm. The catalysed reaction is D-glyceraldehyde 3-phosphate + phosphate + NAD(+) = (2R)-3-phospho-glyceroyl phosphate + NADH + H(+). It participates in carbohydrate degradation; glycolysis; pyruvate from D-glyceraldehyde 3-phosphate: step 1/5. This is Glyceraldehyde-3-phosphate dehydrogenase 2 (Gapdh2) from Drosophila subobscura (Fruit fly).